A 245-amino-acid polypeptide reads, in one-letter code: 8-amino-3,8-dideoxy-manno-octulosonate cytidylyltransferase (245 aa).

The protein belongs to the KdsB family.

The protein localises to the cytoplasm. It catalyses the reaction 8-amino-3,8-dideoxy-alpha-D-manno-octulosonate + CTP = CMP-8-amino-3,8-dideoxy-alpha-D-manno-oct-2-ulosonate + diphosphate. It participates in bacterial outer membrane biogenesis; lipopolysaccharide biosynthesis. Functionally, activates KDO8N (a required 8-carbon sugar) for incorporation into bacterial lipopolysaccharide in the Shewanella genus. The protein is 8-amino-3,8-dideoxy-manno-octulosonate cytidylyltransferase of Shewanella baltica (strain OS185).